A 228-amino-acid polypeptide reads, in one-letter code: uncharacterized protein (228 aa).

Disordered stretches follow at residues 1 to 62 (MQRP…VGRF) and 160 to 228 (SPRP…LSGV). The span at 13 to 33 (AASTRAPPRPSAPQQGRRQPS) shows a compositional bias: low complexity. The segment covering 167 to 176 (RGQQVTQDGP) has biased composition (polar residues).

This is an uncharacterized protein from Homo sapiens (Human).